An 88-amino-acid chain; its full sequence is Potassium channel toxin MeuTXKbeta3-meucin-24 (88 aa).

The first 22 residues, 1–22 (MMKQQFFLFLAVIVMISSVIEA), serve as a signal peptide directing secretion. Residues 55 to 88 (EYACPVIEKWCEDHCQAKNAIGRCENTECKCLSK) form the BetaSPN-type CS-alpha/beta domain. 3 cysteine pairs are disulfide-bonded: Cys58/Cys78, Cys65/Cys83, and Cys69/Cys85.

Belongs to the long chain scorpion toxin family. Class 2 subfamily. As to expression, expressed by the venom gland.

It is found in the secreted. Its function is as follows. Inhibits voltage-gated potassium channels. The synthetic meucin-24 inhibits the development of P.berghei ookinetes, kills intraerythrocytic P.falciparum, and is cytotoxic to the Drosophila S2 cells at micromolar concentrations. No antibacterial, antifungal and hemolytic activities have been found at micromolar concentrations. This chain is Potassium channel toxin MeuTXKbeta3-meucin-24, found in Mesobuthus eupeus (Lesser Asian scorpion).